Here is a 140-residue protein sequence, read N- to C-terminus: Callisulfakinin (140 aa).

A signal peptide spans 1 to 30 (MYSQQRIFNSKYFIFFIAVLSIFWLPTMSA). A propeptide spanning residues 31 to 109 (RNLENSKNEN…LEYEDEDRSK (79 aa)) is cleaved from the precursor. A Sulfotyrosine modification is found at Tyr-114. At Phe-119 the chain carries Phenylalanine amide. Tyr-131 carries the sulfotyrosine modification. Phe-136 bears the Phenylalanine amide mark. A propeptide spanning residues 139 to 140 (SI) is cleaved from the precursor.

This sequence belongs to the gastrin/cholecystokinin family. As to expression, in brain, it is specifically expressed in four pairs of neurons. Not expressed in other cells of the brain and in the thoracico-abdominal ganglion.

Its subcellular location is the secreted. Its function is as follows. Callisulfakinin I is a neuropeptide. The existence of Callisulfakinin II is uncertain. In Calliphora vomitoria (Blue bottle fly), this protein is Callisulfakinin.